The sequence spans 497 residues: MTSSTTSSTDTAVLVLAAGAGTRMRSDIPKVLHTLGGRSMLAHALHTVAKVAPQHLVVVLGHDRERIAPAVEALATDLGRPIDVAIQDQQLGTGHAAECGLAALPEDFTGVVVVTAGDVPLLDADTMADLLATHGSAAATVLTTTVDDPTGYGRILRTQDNEVTSIVEQADASPSQRAIREVNAGVYAFDITALRSALRRLRSDNAQHELYLTDVIAIFRQDGLSVRARHVDDSALVAGVNDRVQLAALGAELNRRIVTAHQRAGVTVIDPGSTWIDVDVTIGRDTVIRPGTQLLGRTRVGGRCDVGPDTTLSDVTVGDGASVVRTHGSESLIGAGATVGPFTYLRPGTALGAEGKLGAFVETKNATIGAGTKVPHLTYVGDADIGEHSNIGASSVFVNYDGETKNRTTIGSHVRTGSDTMFVAPVTVGDGAYTGAGTVIRRNVPPGALAVSAGSQRNIEGWVVRKRPGSAAARAAERASGEAAEQALGHHDDSQGS.

Positions 1 to 243 (MTSSTTSSTD…SALVAGVNDR (243 aa)) are pyrophosphorylase. UDP-N-acetyl-alpha-D-glucosamine-binding positions include 16 to 19 (LAAG), lysine 30, glutamine 87, and 92 to 93 (GT). Aspartate 118 lines the Mg(2+) pocket. UDP-N-acetyl-alpha-D-glucosamine is bound by residues glycine 153, glutamate 168, asparagine 183, and asparagine 241. Residue asparagine 241 participates in Mg(2+) binding. The tract at residues 244–264 (VQLAALGAELNRRIVTAHQRA) is linker. Residues 265–497 (GVTVIDPGST…LGHHDDSQGS (233 aa)) are N-acetyltransferase. Positions 346 and 364 each coordinate UDP-N-acetyl-alpha-D-glucosamine. Histidine 376 (proton acceptor) is an active-site residue. Positions 379 and 390 each coordinate UDP-N-acetyl-alpha-D-glucosamine. Acetyl-CoA-binding positions include alanine 393, 399–400 (NY), serine 418, and alanine 436. The segment at 473-497 (ARAAERASGEAAEQALGHHDDSQGS) is disordered. The segment covering 488-497 (LGHHDDSQGS) has biased composition (basic and acidic residues).

This sequence in the N-terminal section; belongs to the N-acetylglucosamine-1-phosphate uridyltransferase family. The protein in the C-terminal section; belongs to the transferase hexapeptide repeat family. Homotrimer. Mg(2+) serves as cofactor.

The protein resides in the cytoplasm. The enzyme catalyses alpha-D-glucosamine 1-phosphate + acetyl-CoA = N-acetyl-alpha-D-glucosamine 1-phosphate + CoA + H(+). It carries out the reaction N-acetyl-alpha-D-glucosamine 1-phosphate + UTP + H(+) = UDP-N-acetyl-alpha-D-glucosamine + diphosphate. The protein operates within nucleotide-sugar biosynthesis; UDP-N-acetyl-alpha-D-glucosamine biosynthesis; N-acetyl-alpha-D-glucosamine 1-phosphate from alpha-D-glucosamine 6-phosphate (route II): step 2/2. It functions in the pathway nucleotide-sugar biosynthesis; UDP-N-acetyl-alpha-D-glucosamine biosynthesis; UDP-N-acetyl-alpha-D-glucosamine from N-acetyl-alpha-D-glucosamine 1-phosphate: step 1/1. It participates in bacterial outer membrane biogenesis; LPS lipid A biosynthesis. Its function is as follows. Catalyzes the last two sequential reactions in the de novo biosynthetic pathway for UDP-N-acetylglucosamine (UDP-GlcNAc). The C-terminal domain catalyzes the transfer of acetyl group from acetyl coenzyme A to glucosamine-1-phosphate (GlcN-1-P) to produce N-acetylglucosamine-1-phosphate (GlcNAc-1-P), which is converted into UDP-GlcNAc by the transfer of uridine 5-monophosphate (from uridine 5-triphosphate), a reaction catalyzed by the N-terminal domain. This chain is Bifunctional protein GlmU, found in Mycobacterium sp. (strain JLS).